The sequence spans 363 residues: UDP-N-acetylglucosamine--N-acetylmuramyl-(pentapeptide) pyrophosphoryl-undecaprenol N-acetylglucosamine transferase (363 aa).

UDP-N-acetyl-alpha-D-glucosamine is bound by residues 16 to 18 (TGG), asparagine 128, arginine 167, serine 195, isoleucine 249, 268 to 273 (ALTVSE), and glutamine 294.

Belongs to the glycosyltransferase 28 family. MurG subfamily.

The protein resides in the cell inner membrane. The enzyme catalyses di-trans,octa-cis-undecaprenyl diphospho-N-acetyl-alpha-D-muramoyl-L-alanyl-D-glutamyl-meso-2,6-diaminopimeloyl-D-alanyl-D-alanine + UDP-N-acetyl-alpha-D-glucosamine = di-trans,octa-cis-undecaprenyl diphospho-[N-acetyl-alpha-D-glucosaminyl-(1-&gt;4)]-N-acetyl-alpha-D-muramoyl-L-alanyl-D-glutamyl-meso-2,6-diaminopimeloyl-D-alanyl-D-alanine + UDP + H(+). It functions in the pathway cell wall biogenesis; peptidoglycan biosynthesis. In terms of biological role, cell wall formation. Catalyzes the transfer of a GlcNAc subunit on undecaprenyl-pyrophosphoryl-MurNAc-pentapeptide (lipid intermediate I) to form undecaprenyl-pyrophosphoryl-MurNAc-(pentapeptide)GlcNAc (lipid intermediate II). The polypeptide is UDP-N-acetylglucosamine--N-acetylmuramyl-(pentapeptide) pyrophosphoryl-undecaprenol N-acetylglucosamine transferase (Marinobacter nauticus (strain ATCC 700491 / DSM 11845 / VT8) (Marinobacter aquaeolei)).